Reading from the N-terminus, the 374-residue chain is uncharacterized protein (374 aa).

A divalent metal cation-binding residues include Asp-158, His-160, Asp-190, Asn-221, His-312, and His-314.

The protein belongs to the metallophosphoesterase superfamily. The cofactor is a divalent metal cation.

This is an uncharacterized protein from Campylobacter jejuni subsp. jejuni serotype O:2 (strain ATCC 700819 / NCTC 11168).